The primary structure comprises 261 residues: MPQNEYIEQHIKQHGRRLDHEERKRKREAREAHKISERAQKLTGWKGKQFAKKRYSEKVAMRKKIKAHEQSKVKGGSKPLDESGDALPTYLLDREQTNTAKAISSSIKQKRLEKADKFSVPLPKVRGISEEEMFKVVKTGKSKTKSWKRMITKHTFVGEGFTRRPVKMERIIRPSALRQKKANVTHPELGVTVFLPILSVKKNPQSPMYTQLGVLTKGTIIEVNVSELGMVTSGGKVVWGKYAQITNEPDRDGCVNAVLLV.

The segment at 1–35 is disordered; the sequence is MPQNEYIEQHIKQHGRRLDHEERKRKREAREAHKI. Positions 7-35 are enriched in basic and acidic residues; it reads IEQHIKQHGRRLDHEERKRKREAREAHKI. 2 consecutive short sequence motifs (nuclear localization signal) follow at residues 15–22 and 51–58; these read GRRLDHEE and AKKRYSEK. Positions 61 to 84 are disordered; it reads MRKKIKAHEQSKVKGGSKPLDESG.

The protein belongs to the eukaryotic ribosomal protein eS8 family. Ribosome biogenesis protein NSA2 subfamily. As to quaternary structure, component of the pre-66S ribosomal particle. Interacts with NOP7 and RRP1. Interacts with RSA4 (via WD repeats).

The protein resides in the nucleus. It localises to the nucleolus. Involved in the biogenesis of the 60S ribosomal subunit. May play a part in the quality control of pre-60S particles. This Vanderwaltozyma polyspora (strain ATCC 22028 / DSM 70294 / BCRC 21397 / CBS 2163 / NBRC 10782 / NRRL Y-8283 / UCD 57-17) (Kluyveromyces polysporus) protein is Ribosome biogenesis protein NSA2 (NSA2).